The chain runs to 494 residues: Apolipoprotein N-acyltransferase (494 aa).

6 consecutive transmembrane segments (helical) span residues threonine 16–isoleucine 36, leucine 41–leucine 61, serine 62–serine 82, leucine 133–glycine 153, glycine 173–phenylalanine 193, and leucine 202–alanine 222. The CN hydrolase domain occupies tryptophan 235–valine 461. The active-site Proton acceptor is glutamate 276. The active site involves lysine 325. The Nucleophile role is filled by cysteine 373. A helical transmembrane segment spans residues tyrosine 468 to alanine 488.

It belongs to the CN hydrolase family. Apolipoprotein N-acyltransferase subfamily.

It is found in the cell inner membrane. The enzyme catalyses N-terminal S-1,2-diacyl-sn-glyceryl-L-cysteinyl-[lipoprotein] + a glycerophospholipid = N-acyl-S-1,2-diacyl-sn-glyceryl-L-cysteinyl-[lipoprotein] + a 2-acyl-sn-glycero-3-phospholipid + H(+). The protein operates within protein modification; lipoprotein biosynthesis (N-acyl transfer). Catalyzes the phospholipid dependent N-acylation of the N-terminal cysteine of apolipoprotein, the last step in lipoprotein maturation. This chain is Apolipoprotein N-acyltransferase, found in Prochlorococcus marinus (strain SARG / CCMP1375 / SS120).